Consider the following 504-residue polypeptide: Diacylglycerol O-acyltransferase 1B (504 aa).

The tract at residues 1-72 is disordered; the sequence is MAISDEPESV…VNSQQQNEKQ (72 aa). Polar residues predominate over residues 24–41; sequence SATSTAGLFNSPETTTDS. Residues 53–65 show a composition bias toward low complexity; sequence DDSINSDDAAVNS. A run of 7 helical transmembrane segments spans residues 108 to 128, 152 to 172, 184 to 204, 209 to 229, 259 to 279, 301 to 321, and 348 to 368; these read HAGL…RLII, WPLF…FIVE, VVVV…VLVI, SAFV…LKLV, YPYN…TLCY, LIIF…PIVQ, and VWLC…AELL. The FYXDWWN motif motif lies at 375 to 381; the sequence is FYKDWWN. 3 consecutive transmembrane segments (helical) span residues 416–436, 438–458, and 471–491; these read AAAL…CIAV, CHIF…LVLI, and VGNM…CVLL. Histidine 430 is a catalytic residue.

Belongs to the membrane-bound acyltransferase family. Sterol o-acyltransferase subfamily. In terms of tissue distribution, highly expressed in flowers and pods. Expressed at low levels in roots, stems and leaves.

Its subcellular location is the endoplasmic reticulum membrane. The enzyme catalyses an acyl-CoA + a 1,2-diacyl-sn-glycerol = a triacyl-sn-glycerol + CoA. The protein operates within glycerolipid metabolism; triacylglycerol biosynthesis. In terms of biological role, major contributors to triacylglycerol (TAG) synthesis and oil accumulation in developing seeds. Catalyzes the acylation of the sn-3 hydroxy group of sn-1,2-diacylglycerol using acyl-CoA. Has a marked preference for oleoyl-CoA and sn-1,2-dioleoylglycerol over vernoloyl-CoA and sn-1,2-divernoloylglycerol. This is Diacylglycerol O-acyltransferase 1B from Glycine max (Soybean).